The sequence spans 681 residues: Glutamine--fructose-6-phosphate aminotransferase [isomerizing] 1 (681 aa).

Cysteine 2 functions as the For GATase activity in the catalytic mechanism. Residues 2–287 (CGIFAYLNYH…DDDVAAVVDG (286 aa)) enclose the Glutamine amidotransferase type-2 domain. Phosphoserine occurs at positions 103 and 243. Positions 295–662 (KRTARDHPGR…LQLLAFHLAV (368 aa)) are isomerase. SIS domains follow at residues 359–498 (HIKE…DRIS) and 530–671 (LATE…VDFP). Substrate is bound by residues 376 to 377 (TS), 421 to 423 (SQS), threonine 426, and histidine 577.

As to quaternary structure, homotetramer, may also exist as homodimers.

The catalysed reaction is D-fructose 6-phosphate + L-glutamine = D-glucosamine 6-phosphate + L-glutamate. It participates in nucleotide-sugar biosynthesis; UDP-N-acetyl-alpha-D-glucosamine biosynthesis; alpha-D-glucosamine 6-phosphate from D-fructose 6-phosphate: step 1/1. With respect to regulation, inhibited by 4,4'-dithiodipyridine. Its function is as follows. Controls the flux of glucose into the hexosamine pathway. Most likely involved in regulating the availability of precursors for N- and O-linked glycosylation of proteins. Regulates the circadian expression of clock genes BMAL1 and CRY1. Has a role in fine tuning the metabolic fluctuations of cytosolic UDP-GlcNAc and its effects on hyaluronan synthesis that occur during tissue remodeling. The polypeptide is Glutamine--fructose-6-phosphate aminotransferase [isomerizing] 1 (Gfpt1) (Rattus norvegicus (Rat)).